The sequence spans 134 residues: Protein NrdI (134 aa).

Belongs to the NrdI family.

Probably involved in ribonucleotide reductase function. The polypeptide is Protein NrdI (Yersinia enterocolitica serotype O:8 / biotype 1B (strain NCTC 13174 / 8081)).